The sequence spans 495 residues: Potassium voltage-gated channel subfamily A member 1 (495 aa).

The disordered stretch occupies residues 1–30; that stretch reads MTVMSGENVDEASAAPGHPQDGSYPRQADH. Residues 1–128 form a tetramerization domain region; that stretch reads MTVMSGENVD…FYELGEEAME (128 aa). The Cytoplasmic segment spans residues 1-164; that stretch reads MTVMSGENVD…LLFEYPESSG (164 aa). S23 carries the post-translational modification Phosphoserine. Residues 165–186 traverse the membrane as a helical segment; the sequence is PARVIAIVSVMVILISIVIFCL. At 187-220 the chain is on the extracellular side; the sequence is ETLPELKDDKDFTGTVHRIDNTTVIYNSNIFTDP. N207 carries N-linked (GlcNAc...) asparagine glycosylation. A helical membrane pass occupies residues 221-242; the sequence is FFIVETLCIIWFSFELVVRFFA. C243 carries the S-palmitoyl cysteine lipid modification. The Cytoplasmic segment spans residues 243–253; the sequence is CPSKTDFFKNI. The chain crosses the membrane as a helical span at residues 254 to 274; it reads MNFIDIVAIIPYFITLGTEIA. The Extracellular segment spans residues 275–287; the sequence is EQEGNQKGEQATS. A helical; Voltage-sensor transmembrane segment spans residues 288 to 308; it reads LAILRVIRLVRVFRIFKLSRH. Residues 309-323 are Cytoplasmic-facing; sequence SKGLQILGQTLKASM. The segment at 310 to 323 is S4-S5 linker; it reads KGLQILGQTLKASM. At S322 the chain carries Phosphoserine; by PKA. The helical transmembrane segment at 324–345 threads the bilayer; it reads RELGLLIFFLFIGVILFSSAVY. The Extracellular segment spans residues 346–359; that stretch reads FAEAEEAESHFSSI. The segment at residues 360–371 is an intramembrane region (helical); it reads PDAFWWAVVSMT. Positions 372–377 match the Selectivity filter motif; that stretch reads TVGYGD. Residues 372 to 379 lie within the membrane without spanning it; it reads TVGYGDMY. Residues 380 to 386 lie on the Extracellular side of the membrane; that stretch reads PVTIGGK. A helical membrane pass occupies residues 387-415; it reads IVGSLCAIAGVLTIALPVPVIVSNFNYFY. At 416 to 495 the chain is on the cytoplasmic side; it reads HRETEGEEQA…VNKSKLLTDV (80 aa). Residues S437 and S439 each carry the phosphoserine modification. Residue S446 is modified to Phosphoserine; by PKA. The PDZ-binding motif lies at 493-495; the sequence is TDV.

Belongs to the potassium channel family. A (Shaker) (TC 1.A.1.2) subfamily. Kv1.1/KCNA1 sub-subfamily. As to quaternary structure, homotetramer and heterotetramer with other channel-forming alpha subunits, such as KCNA2, KCNA4, KCNA5, KCNA6 and KCNA7. Channel activity is regulated by interaction with the beta subunits KCNAB1 and KCNAB2. Identified in a complex with KCNA2 and KCNAB2. Interacts (via C-terminus) with the PDZ domains of DLG1, DLG2 and DLG4. Interacts with LGI1 within a complex containing LGI1, KCNA4 and KCNAB1. Interacts (via N-terminus) with STX1A; this promotes channel inactivation. Interacts (via N-terminus) with the heterodimer formed by GNB1 and GNG2; this promotes channel inactivation. Can interact simultaneously with STX1A and the heterodimer formed by GNB1 and GNG2. Interacts (via cytoplasmic N-terminal domain) with KCNRG; this inhibits channel activity. Interacts with ANK3; this inhibits channel activity. Interacts with ADAM11. In terms of processing, N-glycosylated. Palmitoylated on Cys-243; which may be required for membrane targeting. Post-translationally, phosphorylated on tyrosine residues. Phosphorylation increases in response to NRG1; this inhibits channel activity. Phosphorylation at Ser-446 regulates channel activity by down-regulating expression at the cell membrane. As to expression, detected adjacent to nodes of Ranvier in juxtaparanodal zones in spinal cord nerve fibers, but also in paranodal regions in some myelinated spinal cord axons (at protein level). Detected in the islet of Langerhans.

The protein localises to the cell membrane. It localises to the membrane. Its subcellular location is the cell projection. The protein resides in the axon. It is found in the cytoplasmic vesicle. The protein localises to the perikaryon. It localises to the endoplasmic reticulum. Its subcellular location is the dendrite. The protein resides in the cell junction. It is found in the synapse. The protein localises to the presynaptic cell membrane. It localises to the presynapse. The enzyme catalyses K(+)(in) = K(+)(out). With respect to regulation, inhibited by 1.1 mM 4-aminopyridine (4-AP) and by 20 mM tetraethylammonium (TEA), but not by charybdotoxin (CTX). Inhibited by dendrotoxin (DTX). Functionally, voltage-gated potassium channel that mediates transmembrane potassium transport in excitable membranes, primarily in the brain and the central nervous system, but also in the kidney. Contributes to the regulation of the membrane potential and nerve signaling, and prevents neuronal hyperexcitability. Forms tetrameric potassium-selective channels through which potassium ions pass in accordance with their electrochemical gradient. The channel alternates between opened and closed conformations in response to the voltage difference across the membrane. Can form functional homotetrameric channels and heterotetrameric channels that contain variable proportions of KCNA1, KCNA2, KCNA4, KCNA5, KCNA6, KCNA7, and possibly other family members as well; channel properties depend on the type of alpha subunits that are part of the channel. Channel properties are modulated by cytoplasmic beta subunits that regulate the subcellular location of the alpha subunits and promote rapid inactivation of delayed rectifier potassium channels. In vivo, membranes probably contain a mixture of heteromeric potassium channel complexes, making it difficult to assign currents observed in intact tissues to any particular potassium channel family member. Homotetrameric KCNA1 forms a delayed-rectifier potassium channel that opens in response to membrane depolarization, followed by slow spontaneous channel closure. In contrast, a heterotetrameric channel formed by KCNA1 and KCNA4 shows rapid inactivation. Regulates neuronal excitability in hippocampus, especially in mossy fibers and medial perforant path axons, preventing neuronal hyperexcitability. Response to toxins that are selective for KCNA1, respectively for KCNA2, suggests that heteromeric potassium channels composed of both KCNA1 and KCNA2 play a role in pacemaking and regulate the output of deep cerebellar nuclear neurons. May function as down-stream effector for G protein-coupled receptors and inhibit GABAergic inputs to basolateral amygdala neurons. May contribute to the regulation of neurotransmitter release, such as gamma-aminobutyric acid (GABA) release. Plays a role in regulating the generation of action potentials and preventing hyperexcitability in myelinated axons of the vagus nerve, and thereby contributes to the regulation of heart contraction. Required for normal neuromuscular responses. Regulates the frequency of neuronal action potential firing in response to mechanical stimuli, and plays a role in the perception of pain caused by mechanical stimuli, but does not play a role in the perception of pain due to heat stimuli. Required for normal responses to auditory stimuli and precise location of sound sources, but not for sound perception. The use of toxins that block specific channels suggest that it contributes to the regulation of the axonal release of the neurotransmitter dopamine. Required for normal postnatal brain development and normal proliferation of neuronal precursor cells in the brain. Plays a role in the reabsorption of Mg(2+) in the distal convoluted tubules in the kidney and in magnesium ion homeostasis, probably via its effect on the membrane potential. In Homo sapiens (Human), this protein is Potassium voltage-gated channel subfamily A member 1.